The primary structure comprises 523 residues: Pentatricopeptide repeat-containing protein At1g64580 (523 aa).

PPR repeat units lie at residues H43–P77, S78–H112, D113–P147, S148–P182, N183–A217, D218–P252, N253–P287, N288–P322, D323–G357, D358–P392, D393–V427, D428–P462, and D463–P497.

Belongs to the PPR family. P subfamily.

This is Pentatricopeptide repeat-containing protein At1g64580 from Arabidopsis thaliana (Mouse-ear cress).